Consider the following 6548-residue polypeptide: Epiplakin (6548 aa).

The residue at position 33 (threonine 33) is a Phosphothreonine. Plectin repeat units lie at residues 41 to 78 (AALPTTARSIAGVYVEASGQTQSIYAAIKQGLLPTGLG), 79 to 116 (LTLLEAQAATGGLVDLAQGQLLPVSEALRRGLVGLELK), 117 to 154 (EKLLAAERAVTGYPDPYGGEKLSLFQAIKKEVVDRTLG), 155 to 192 (WRLLEAQLATGGLVDPTQGVQVAPELACQQGLLDKETW), 285 to 322 (RRYLEGTGGLAGVVLLPGGHKKSFFQATVEHLVSKGIA), 323 to 360 (LQLLEAQAATRTLVHPTTGQRLWVEEAVKAGLVGPELH), 362 to 398 (QLLVAEQAVTGYYDPFSSSRIPVFQAMKKGLVDQPLA), 399 to 436 (LRLLDAQLATGGLICPARRFRLPLEAALRFGCLDEETR), and 437 to 470 (QRLSQAMGFSDPTTHDRLGYEQLLALSVTDPETG). The interval 49–1123 (SIAGVYVEAS…KASGLHLLPL (1075 aa)) is interaction with KRT5. Positions 545–565 (SVEELAAELKNIVEQAAATAK) form a coiled coil. Plectin repeat units lie at residues 611–648 (QRYLQGTGSIAGLLLPDSQERLSIYEARSKGLLRPGTA), 649–686 (LILLEAQAATGFIIDPKENKRYSVEEALRAGVIGPDVY), 687–724 (AKLLSAEHAVTGYTDPYSGEQISLFQAMQRDLIVRDHG), 725–762 (IRLLEAQIATGGVIDPVHSHRVPVDVAYQRGYFDQILN), and 766–800 (LDPSDDTKGFFDPNTHENLTYLQLLERCVHDSETG). Residues 851–886 (TEDRRRQLLQRYRQRKITLEQVTQLLEKEMRRWTDI) are a coiled coil. Plectin repeat units lie at residues 931-968 (HRYLRGSGTVGGVLLKPSNQRISLYQAMKQKLLPPSTA), 969-1006 (LALLEAQAATGTITDPCSMETLSVDEAVCRGVVGAEVY), 1007-1044 (GKLKRAEHSITGYRDPFSGKKVSLFRAMKKGLVPVEQA), 1224-1284 (QETL…TGLG), 1285-1322 (QQLLEAQVASGFLVNPLTNQRLSVEGAVKAGLVGMEQS), 1323-1360 (EHLRQVEKAVTGYSDPFSGGSLSLWQAMEKGLVTQSEA), 1361-1398 (FPLLQVQLATGGVVDPVHGVHLPQEVAYKLGLLDEQTS), and 1402-1436 (TATGKENKLFFDPNSREKVTYQQLRELCVLDADTG). Threonine 1551 is modified (phosphothreonine). 5 Plectin repeats span residues 1572–1609 (RRSLEGGNFIAGVLIQDTKEKMSIPEALRRHILRPGTA), 1610–1647 (LVLLEAQAATGFIIDPVENRKLTVEQAFQAGMFGKETY), 1648–1685 (MKLLSAERAVTGYTDPYTGEQISLFQAMQRDLIVRDHG), 1686–1723 (IRLLEAQIATGGIIDPVHSHRVPVDVAYQRGYFNEEMN), and 1727–1761 (SDPSDDTKGFFDPNTHENLTYLQLLERCVEDPETG). The interaction with KRT5 stretch occupies residues 1580 to 6545 (FIAGVLIQDT…PETGLLFLSL (4966 aa)). Residues 1819-1851 (RKLLREYRAQNIGLENLLEVITSTVEETEKQSQ) are a coiled coil. 9 Plectin repeats span residues 1898 to 1935 (RVYLEGSNYIAGVIAPLTQKVMSFYEASREELIPAGFA), 1936 to 1973 (AQMLEAQAATGYLMDPCTNQRLCVDEAIAAGLVGEDLR), 1974 to 2011 (ERLVNAEMAAKGYKDPATGETIPLYQAMERKLVGREEA), 2012 to 2049 (LRLLEVQVATGGVIDPRHHHRVPLDTACQRGCMCDDSL), 2225 to 2267 (KRYL…PGTA), 2268 to 2305 (LVLLEAQAATGFIIDPVNNRRLSVEEAVAAGVVGGEIQ), 2306 to 2343 (EKLLSAERAVTGYTDPYTGDQISLFQAMQRDLIVRDHG), 2344 to 2381 (IRLLEAQIATGGVIDPVHSHRVPVDVAYQRGYFDEDMN), and 2385 to 2419 (ADPGDDTKGFFDPNTHENLTYLQLLRRCVRDPETG). Residues serine 2430 and serine 2508 each carry the phosphoserine modification. Residues 2578–2626 (AEETQESKPKPRDASLKQQDTGARGSGTSPDEGDAQDSSESARQQQEQT) are disordered. A compositionally biased stretch (basic and acidic residues) spans 2582-2592 (QESKPKPRDAS). 2 stretches are compositionally biased toward polar residues: residues 2593–2606 (LKQQDTGARGSGTS) and 2615–2626 (SSESARQQQEQT). Plectin repeat units lie at residues 2740 to 2782 (KRYL…PGTA), 2783 to 2820 (LVLLEAQAATGFIIDPVNNRRLSVEEAVAAGVVGGEIQ), 2821 to 2858 (EKLLSAERAVTGYTDPYTGDQISLFQAMQRDLIVRDHG), 2859 to 2896 (IRLLEAQIATGGVIDPVHSHRVPVDVAYQRGYFDEDMN), and 2900 to 2934 (ADPGDDTKGFFDPNTHENLTYLQLLRRCVRDPETG). Residues 2748 to 2940 (CIAGVLVPVQ…PETGFYMLQL (193 aa)) form an interaction with KRT14 region. The disordered stretch occupies residues 3093–3144 (AEETQESKPKPRDASLKQQDTGARGSGTSPDEGDAQDSSESARQQQEQTLRA). The segment covering 3097–3107 (QESKPKPRDAS) has biased composition (basic and acidic residues). 2 stretches are compositionally biased toward polar residues: residues 3108 to 3121 (LKQQDTGARGSGTS) and 3130 to 3144 (SSESARQQQEQTLRA). Serine 3220 carries the phosphoserine modification. Plectin repeat units follow at residues 3255–3297 (KRYL…PGTA), 3298–3335 (LVLLEAQAATGFIIDPVNNRRLSVEEAVAAGVVGGEIQ), 3336–3373 (EKLLSAERAVTGYTDPYTGDQISLFQAMQRDLIVRDHG), 3374–3411 (IRLLEAQIATGGVIDPVHSHRVPVDVAYQRGYFDEDMN), and 3415–3449 (ADPGDDTKGFFDPNTHENLTYLQLLRRCVRDPETG). 2 positions are modified to phosphoserine: serine 3460 and serine 3538. Positions 3608–3659 (AEETQESKPKPRDASLKQQDTGARGSGTSPDEGDAQDSSESARQQQEQTLRA) are disordered. Positions 3612 to 3622 (QESKPKPRDAS) are enriched in basic and acidic residues. Composition is skewed to polar residues over residues 3623–3636 (LKQQDTGARGSGTS) and 3645–3659 (SSESARQQQEQTLRA). The residue at position 3735 (serine 3735) is a Phosphoserine. Plectin repeat units follow at residues 3770 to 3812 (KRYL…PGTA), 3813 to 3850 (LVLLEAQAATGFIIDPVNNRRLSVEEAVAAGVVGGEIQ), 3851 to 3888 (EKLLSAERAVTGYTDPYTGDQISLFQAMQRDLIVRDHG), 3889 to 3926 (IRLLEAQIATGGVIDPVHSHRVPVDVAYQRGYFDEDMN), and 3930 to 3964 (ADPGDDTKGFFDPNTHENLTYLQLLRRCVRDPETG). 2 positions are modified to phosphoserine: serine 3975 and serine 4053. The interval 4123 to 4174 (AEETQESKPKPRDASLKQQDTGARGSGTSPDEGDAQDSSESARQQQEQTLRA) is disordered. Over residues 4127 to 4137 (QESKPKPRDAS) the composition is skewed to basic and acidic residues. Polar residues-rich tracts occupy residues 4138–4151 (LKQQDTGARGSGTS) and 4160–4174 (SSESARQQQEQTLRA). 5 Plectin repeats span residues 4285-4327 (KRYL…PGTA), 4328-4365 (LVLLEAQAATGFIIDPVNNRRLSVEEAVAAGVVGGEIQ), 4366-4403 (EKLLSAERAVTGYTDPYTGDQISLFQAMQRDLIVRDHG), 4404-4441 (IRLLEAQIATGGVIDPVHSHRVPVDVAYQRGYFDEDMN), and 4445-4479 (ADPGDDTKGFFDPNTHENLTYLQLLRRCVRDPETG). A disordered region spans residues 4638-4689 (AEETQESKPKPRDASLKQQDTGARGSGTSPDEGDAQDSSESARQQQEQTLRA). Positions 4642 to 4652 (QESKPKPRDAS) are enriched in basic and acidic residues. Composition is skewed to polar residues over residues 4653 to 4666 (LKQQDTGARGSGTS) and 4675 to 4689 (SSESARQQQEQTLRA). Serine 4765 carries the post-translational modification Phosphoserine. 5 Plectin repeats span residues 4800–4842 (KRYL…PGTA), 4843–4880 (LVLLEAQAATGFIIDPVNNRRLSVEEAVAAGVVGGEIQ), 4881–4918 (EKLLSAERAVTGYTDPYTGDQISLFQAMQRDLIVRDHG), 4919–4956 (IRLLEAQIATGGVIDPVHSHRVPVDVAYQRGYFDEDMN), and 4960–4994 (ADPGDDTKGFFDPNTHENLTYLQLLRRCVRDPETG). 2 positions are modified to phosphoserine: serine 5005 and serine 5083. The segment at 5153-5204 (AEETQESKPKPRDASLKQQDTGARGSGTSPDEGDAQDSSESARQQQEQTLRA) is disordered. Over residues 5157–5167 (QESKPKPRDAS) the composition is skewed to basic and acidic residues. Polar residues-rich tracts occupy residues 5168 to 5181 (LKQQDTGARGSGTS) and 5190 to 5204 (SSESARQQQEQTLRA). 5 Plectin repeats span residues 5315–5357 (KRYL…PGTA), 5358–5395 (LVLLEAQAATGFIIDPVNNRRLSVEEAVAAGVVGGEIQ), 5396–5433 (EKLLSAERAVTGYTDPYTGDQISLFQAMQRDLIVRDHG), 5434–5471 (IRLLEAQIATGGVIDPVHSHRVPVDVAYQRGYFDEDMN), and 5475–5509 (ADPGDDTKGFFDPNTHENLTYLQLLRRCVRDPETG). The segment at 5668 to 5719 (AEETQESKPKPRDASLKQQDTGARGSGTSPDEGDAQDSSESARQQQEQTLRA) is disordered. Residues 5672-5682 (QESKPKPRDAS) are compositionally biased toward basic and acidic residues. Polar residues-rich tracts occupy residues 5683-5696 (LKQQDTGARGSGTS) and 5705-5719 (SSESARQQQEQTLRA). Serine 5795 carries the phosphoserine modification. Plectin repeat units follow at residues 5830–5872 (KRYL…PGTA), 5873–5910 (LVLLEAQAATGFIIDPVNNRRLSVEEAVAAGVVGGEIQ), 5911–5948 (EKLLSAERAVTGYTDPYTGDQISLFQAMQRDLIVRDHG), 5949–5986 (IRLLEAQIATGGVIDPVHSHRVPVDVAYQRGYFDEDMN), and 5990–6024 (ADPGDDTKGFFDPNTHENLTYLQLLRRCVRDPETG). Phosphoserine is present on residues serine 6035 and serine 6113. A disordered region spans residues 6183 to 6234 (AEETQESKPKPRDASLKQQDTGARGSGTSPDEGDAQDSSESARQQQEQTLRA). Residues 6187 to 6197 (QESKPKPRDAS) are compositionally biased toward basic and acidic residues. 2 stretches are compositionally biased toward polar residues: residues 6198 to 6211 (LKQQDTGARGSGTS) and 6220 to 6234 (SSESARQQQEQTLRA). Serine 6310 is subject to Phosphoserine. Plectin repeat units follow at residues 6345-6387 (KRYL…PGTA), 6388-6425 (LVLLEAQAATGFIIDPVNNRRLSVEEAVAAGVVGGEIQ), 6426-6463 (EKLLSAERAVTGYTDPYTGDQISLFQAMQRDLIVKNHG), 6464-6501 (IRLLEAQIATGGVIDPVHSHRVPVDVAYQRGYFDQEMN), and 6505-6539 (ADPGDDTKGFFDPNTHENLTYLQLLQRATIDPETG).

The protein belongs to the plakin or cytolinker family. As to quaternary structure, interacts with KRT5, KRT14 and KRT5/KRT14 heterotetramer; interacts preferentially with assembled filaments rather than keratin monomers. Interacts with KRT8 and KRT18 and KRT8/KRT18 heterotetramer; interacts preferentially with assembled filaments rather than keratin monomers. Interacts with KRT1, VIM and DES; interaction is stronger with KRT1 than with VIM or DES; interaction is dependent of higher-order structure of intermediate filament. High levels in skin, small intestine and salivary gland. Lower levels in lung, uterus and liver. Not detected in brain, kidney, muscle, heart or spleen. In skin, expressed in all epidermal layers but not in the dermis. In intestine, expressed exclusively in the epithelial cell layer of the villi. In liver, expressed at hepatocyte margins. Around the region of the wound, expressed in the upper half of the epidermis. Weakly expressed on the basilar side of the suprabasal layer of the epidermis at the wound's edge. Expressed strongly in the upper layer of the epidermis, especially in larger keratinocytes. Expressed in undifferentiated primary keratinocytes. Strongly expressed in ductal cells, and also expressed in acinar cells. Expressed in hepatocytes and cholangiocytes.

The protein resides in the cytoplasm. The protein localises to the cytoskeleton. Its subcellular location is the apicolateral cell membrane. It is found in the basolateral cell membrane. It localises to the cell junction. The protein resides in the hemidesmosome. The protein localises to the tight junction. Its subcellular location is the cell projection. In terms of biological role, cytoskeletal linker protein that connects to intermediate filaments and controls their reorganization in response to stress. In response to mechanical stress like wound healing, is associated with the machinery for cellular motility by slowing down keratinocyte migration and proliferation and accelerating keratin bundling in proliferating keratinocytes thus contributing to tissue architecture. However in wound healing in corneal epithelium also positively regulates cell differentiation and proliferation and negatively regulates migration thereby controlling corneal epithelium morphogenesis and integrity. In response to cellular stress, plays a role in keratin filament reorganization, probably by protecting keratin filaments against disruption. During liver and pancreas injuries, plays a protective role by chaperoning disease-induced intermediate filament reorganization. The polypeptide is Epiplakin (Mus musculus (Mouse)).